The primary structure comprises 764 residues: DNA polymerase 3 (764 aa).

This sequence belongs to the DNA polymerase type-B family.

The enzyme catalyses DNA(n) + a 2'-deoxyribonucleoside 5'-triphosphate = DNA(n+1) + diphosphate. The polypeptide is DNA polymerase 3 (dpo3) (Saccharolobus solfataricus (strain ATCC 35092 / DSM 1617 / JCM 11322 / P2) (Sulfolobus solfataricus)).